The chain runs to 118 residues: Large ribosomal subunit protein bL20 (118 aa).

Belongs to the bacterial ribosomal protein bL20 family. In terms of assembly, part of the 50S ribosomal subunit. Contacts proteins L13 and L21.

Functionally, binds directly to 23S rRNA, probably serving to organize its structure. This is Large ribosomal subunit protein bL20 (rplT) from Deinococcus radiodurans (strain ATCC 13939 / DSM 20539 / JCM 16871 / CCUG 27074 / LMG 4051 / NBRC 15346 / NCIMB 9279 / VKM B-1422 / R1).